The following is a 605-amino-acid chain: Vicilin GC72-A (605 aa).

Positions 1-23 (MVRNKSVFVVLLFSLFLSFGLLC) are cleaved as a signal peptide. Disordered stretches follow at residues 52–81 (TRGQ…EDPQ) and 157–181 (GERE…QRNN). The span at 166 to 175 (EEEEESDEGE) shows a compositional bias: acidic residues. Cupin type-1 domains are found at residues 183–341 (YYFH…EQLD) and 387–564 (FNLL…RLVD). Residues 465-485 (SSDWSSREEEEQEEQEVERRS) are disordered.

This sequence belongs to the 7S seed storage protein family.

Its subcellular location is the vacuole. The protein resides in the aleurone grain. Its function is as follows. Seed storage protein. The polypeptide is Vicilin GC72-A (Gossypium hirsutum (Upland cotton)).